The following is an 87-amino-acid chain: MNLSIFLFLIGILGFILNRKNIILMIIAIEIMLLAVTLLVLISSFGFDDNVGQTFSLYIISIAGAESVIGLSILVAFYRLFLVLNYL.

A run of 3 helical transmembrane segments spans residues 1–21 (MNLS…NRKN), 22–42 (IILM…LVLI), and 57–77 (LYII…LVAF).

This sequence belongs to the complex I subunit 4L family. In terms of assembly, core subunit of respiratory chain NADH dehydrogenase (Complex I) which is composed of 45 different subunits.

It is found in the mitochondrion inner membrane. The catalysed reaction is a ubiquinone + NADH + 5 H(+)(in) = a ubiquinol + NAD(+) + 4 H(+)(out). Its function is as follows. Core subunit of the mitochondrial membrane respiratory chain NADH dehydrogenase (Complex I) which catalyzes electron transfer from NADH through the respiratory chain, using ubiquinone as an electron acceptor. The sequence is that of NADH-ubiquinone oxidoreductase chain 4L (ND4L) from Moniliophthora perniciosa (strain FA553 / isolate CP02) (Witches'-broom disease fungus).